Here is a 397-residue protein sequence, read N- to C-terminus: MYFLLNLVGLIVIMAVVFLCSPQKKKIKWRPIITLIVLELLITWFMLGTKVGSWAIGKIGDFFTWLIACASDGIAFAFPSVMANETVDFFFSALLPIIFIVTFFDILTYFGILPWLIDKIGWVISKASRLPKLESFFSIQMMFLGNTEALAVIRQQLTVLSNNRLLTFGLMSMSSISGSIIGSYLSMVPATYVFTAIPLNCLNALIIANLLNPVHVPEDEDIIYTPPKEEKKDFFSTISNSMLVGMNMVIVILAMVIGYVALTSAVNGILGVFVHGLTIQTIFAYLFSPFAFLLGLPVHDAMYVAQLMGMKLATNEFVAMLDLKNNLKSLPPHTVAVATTFLTSFANFSTVGMIYGTYNSILDGEKSTVIGRNVWKLLVSGIAVSLLSAAIVGLFVW.

11 helical membrane-spanning segments follow: residues 1-21, 32-52, 62-82, 97-117, 133-153, 165-185, 187-207, 242-262, 282-302, 335-355, and 377-397; these read MYFL…FLCS, IITL…TKVG, FFTW…PSVM, IIFI…PWLI, LESF…LAVI, LLTF…GSYL, MVPA…ALII, MLVG…YVAL, IFAY…HDAM, VAVA…GMIY, and LLVS…LFVW.

It belongs to the concentrative nucleoside transporter (CNT) (TC 2.A.41) family.

It is found in the cell membrane. In terms of biological role, involved in the uptake of the purine ribonucleosides inosine and guanosine. The polypeptide is Purine nucleoside transport protein NupG (nupG) (Bacillus subtilis (strain 168)).